The primary structure comprises 562 residues: Serine palmitoyltransferase 2 (562 aa).

The helical transmembrane segment at 67–87 threads the bilayer; it reads PMLVAVLTYVGYGVLTLFGYL. Residue K379 is modified to N6-(pyridoxal phosphate)lysine.

It belongs to the class-II pyridoxal-phosphate-dependent aminotransferase family. In terms of assembly, component of the serine palmitoyltransferase (SPT) complex, which is composed of SPTLC1, SPTLC2 or SPTLC3 and SPTSSA or SPTSSB. The heterodimer consisting of SPTLC1 and SPTLC2/SPTLC3 forms the catalytic core of the enzyme, while SPTSSA or SPTSSB subunits determine substrate specificity. SPT also interacts with ORMDL proteins, especially ORMDL3, which negatively regulate SPT activity in the presence of ceramides. Forms dimers of heterodimers with SPTLC1. Pyridoxal 5'-phosphate serves as cofactor. In terms of tissue distribution, widely expressed.

It localises to the endoplasmic reticulum membrane. It catalyses the reaction L-serine + hexadecanoyl-CoA + H(+) = 3-oxosphinganine + CO2 + CoA. The catalysed reaction is octadecanoyl-CoA + L-serine + H(+) = 3-oxoeicosasphinganine + CO2 + CoA. It functions in the pathway lipid metabolism; sphingolipid metabolism. Its activity is regulated as follows. SPT complex catalytic activity is negatively regulated by ORMDL proteins, including ORMDL3, in the presence of ceramides. This mechanism allows to maintain ceramide levels at sufficient concentrations for the production of complex sphingolipids, but which prevents the accumulation of ceramides to levels that trigger apoptosis. Its function is as follows. Component of the serine palmitoyltransferase multisubunit enzyme (SPT) that catalyzes the initial and rate-limiting step in sphingolipid biosynthesis by condensing L-serine and activated acyl-CoA (most commonly palmitoyl-CoA) to form long-chain bases. The SPT complex is composed of SPTLC1, SPTLC2 or SPTLC3 and SPTSSA or SPTSSB. Within this complex, the heterodimer consisting of SPTLC1 and SPTLC2/SPTLC3 forms the catalytic core. The composition of the serine palmitoyltransferase (SPT) complex determines the substrate preference. The SPTLC1-SPTLC2-SPTSSA complex shows a strong preference for C16-CoA substrate, while the SPTLC1-SPTLC3-SPTSSA isozyme uses both C14-CoA and C16-CoA as substrates, with a slight preference for C14-CoA. The SPTLC1-SPTLC2-SPTSSB complex shows a strong preference for C18-CoA substrate, while the SPTLC1-SPTLC3-SPTSSB isozyme displays an ability to use a broader range of acyl-CoAs, without apparent preference. Crucial for adipogenesis. This is Serine palmitoyltransferase 2 from Homo sapiens (Human).